The following is a 313-amino-acid chain: Spermatid maturation protein 1 (313 aa).

A helical transmembrane segment spans residues 29 to 49 (ILLLLGLIICINIGINMVTLL). Disordered regions lie at residues 71–90 (KLRSPGKQTQPSKHSSPAVH), 97–151 (AVKM…HNWD), 243–263 (EPPILGPANVPDIPRRRSSGR), and 291–313 (LASGSSTAEGTRKDWVYRSMTER). Positions 76–85 (GKQTQPSKHS) are enriched in polar residues. Over residues 107–122 (TRRRHRRGSSSRRARR) the composition is skewed to basic residues. A coiled-coil region spans residues 263–289 (RVTYDARDVRRRLRELTREVEALSHCY). Over residues 300 to 313 (GTRKDWVYRSMTER) the composition is skewed to basic and acidic residues.

Its subcellular location is the membrane. It localises to the cytoplasm. Required for proper cytoplasm removal during spermatogenesis. This is Spermatid maturation protein 1 (SPEM1) from Bos taurus (Bovine).